The primary structure comprises 131 residues: Small ribosomal subunit protein uS8 (131 aa).

The protein belongs to the universal ribosomal protein uS8 family. As to quaternary structure, part of the 30S ribosomal subunit. Contacts proteins S5 and S12.

In terms of biological role, one of the primary rRNA binding proteins, it binds directly to 16S rRNA central domain where it helps coordinate assembly of the platform of the 30S subunit. The sequence is that of Small ribosomal subunit protein uS8 from Janthinobacterium sp. (strain Marseille) (Minibacterium massiliensis).